Consider the following 165-residue polypeptide: Transcriptional repressor NrdR (165 aa).

The segment at 3–34 (CPFCRNPDSRVVDSRMADDGSAIRRRRQCPEC) is a zinc-finger region. The ATP-cone domain occupies 46 to 136 (LTVIKRSGVG…VYQAFESLED (91 aa)).

Belongs to the NrdR family. Zn(2+) is required as a cofactor.

Negatively regulates transcription of bacterial ribonucleotide reductase nrd genes and operons by binding to NrdR-boxes. The protein is Transcriptional repressor NrdR of Arthrobacter sp. (strain FB24).